The primary structure comprises 385 residues: DNA replication and repair protein RecF (385 aa).

Residue Gly30–Thr37 coordinates ATP.

This sequence belongs to the RecF family.

The protein localises to the cytoplasm. In terms of biological role, the RecF protein is involved in DNA metabolism; it is required for DNA replication and normal SOS inducibility. RecF binds preferentially to single-stranded, linear DNA. It also seems to bind ATP. The polypeptide is DNA replication and repair protein RecF (Leifsonia xyli subsp. xyli (strain CTCB07)).